Reading from the N-terminus, the 518-residue chain is Bifunctional purine biosynthesis protein PurH (518 aa).

An MGS-like domain is found at 1–144 (MSKRALISVS…KNHAAVTVVC (144 aa)).

This sequence belongs to the PurH family.

It catalyses the reaction (6R)-10-formyltetrahydrofolate + 5-amino-1-(5-phospho-beta-D-ribosyl)imidazole-4-carboxamide = 5-formamido-1-(5-phospho-D-ribosyl)imidazole-4-carboxamide + (6S)-5,6,7,8-tetrahydrofolate. It carries out the reaction IMP + H2O = 5-formamido-1-(5-phospho-D-ribosyl)imidazole-4-carboxamide. Its pathway is purine metabolism; IMP biosynthesis via de novo pathway; 5-formamido-1-(5-phospho-D-ribosyl)imidazole-4-carboxamide from 5-amino-1-(5-phospho-D-ribosyl)imidazole-4-carboxamide (10-formyl THF route): step 1/1. It participates in purine metabolism; IMP biosynthesis via de novo pathway; IMP from 5-formamido-1-(5-phospho-D-ribosyl)imidazole-4-carboxamide: step 1/1. This is Bifunctional purine biosynthesis protein PurH from Lactococcus lactis subsp. cremoris (strain MG1363).